The chain runs to 187 residues: Peptidoglycan-recognition protein 3 (187 aa).

The signal sequence occupies residues 1 to 19 (MKAFLVALLISIELALVFA). Intrachain disulfides connect Cys21-Cys144 and Cys58-Cys64. The 128-residue stretch at 43-170 (KPLKYVIINH…RTIRQTNSPG (128 aa)) folds into the N-acetylmuramoyl-L-alanine amidase domain. N-linked (GlcNAc...) asparagine glycosylation occurs at Asn51.

Belongs to the N-acetylmuramoyl-L-alanine amidase 2 family.

It localises to the secreted. Functionally, peptidoglycan-recognition protein probably involved in innate immunity by binding to peptidoglycans (PGN) of bacteria and activating the prophenoloxidase (proPO) cascade immune response. Binds to 1,3-beta-D-glucan and PGN. In Holotrichia diomphalia (Korean black chafer), this protein is Peptidoglycan-recognition protein 3 (PGRP-3).